A 195-amino-acid chain; its full sequence is Large ribosomal subunit protein bL9 (195 aa).

The protein belongs to the bacterial ribosomal protein bL9 family.

Functionally, binds to the 23S rRNA. The protein is Large ribosomal subunit protein bL9 of Rhodopseudomonas palustris (strain TIE-1).